The sequence spans 79 residues: Large ribosomal subunit protein bL28 (79 aa).

Belongs to the bacterial ribosomal protein bL28 family.

The protein is Large ribosomal subunit protein bL28 of Christiangramia forsetii (strain DSM 17595 / CGMCC 1.15422 / KT0803) (Gramella forsetii).